The sequence spans 136 residues: Nucleoside diphosphate kinase (136 aa).

Positions 10, 58, 86, 92, 104, and 114 each coordinate ATP. His117 serves as the catalytic Pros-phosphohistidine intermediate.

The protein belongs to the NDK family. In terms of assembly, homotetramer. It depends on Mg(2+) as a cofactor.

It localises to the cytoplasm. The enzyme catalyses a 2'-deoxyribonucleoside 5'-diphosphate + ATP = a 2'-deoxyribonucleoside 5'-triphosphate + ADP. It catalyses the reaction a ribonucleoside 5'-diphosphate + ATP = a ribonucleoside 5'-triphosphate + ADP. Its function is as follows. Major role in the synthesis of nucleoside triphosphates other than ATP. The ATP gamma phosphate is transferred to the NDP beta phosphate via a ping-pong mechanism, using a phosphorylated active-site intermediate. In Corynebacterium diphtheriae (strain ATCC 700971 / NCTC 13129 / Biotype gravis), this protein is Nucleoside diphosphate kinase.